Consider the following 430-residue polypeptide: Glutamyl-tRNA reductase (430 aa).

Residues 49-52 (TCNR), Ser109, 114-116 (EGQ), and Gln120 each bind substrate. Catalysis depends on Cys50, which acts as the Nucleophile. 189-194 (GAGKMA) provides a ligand contact to NADP(+).

This sequence belongs to the glutamyl-tRNA reductase family. Homodimer.

It carries out the reaction (S)-4-amino-5-oxopentanoate + tRNA(Glu) + NADP(+) = L-glutamyl-tRNA(Glu) + NADPH + H(+). Its pathway is porphyrin-containing compound metabolism; protoporphyrin-IX biosynthesis; 5-aminolevulinate from L-glutamyl-tRNA(Glu): step 1/2. It functions in the pathway porphyrin-containing compound metabolism; chlorophyll biosynthesis. In terms of biological role, catalyzes the NADPH-dependent reduction of glutamyl-tRNA(Glu) to glutamate 1-semialdehyde (GSA). This chain is Glutamyl-tRNA reductase, found in Crocosphaera subtropica (strain ATCC 51142 / BH68) (Cyanothece sp. (strain ATCC 51142)).